The primary structure comprises 350 residues: Isopentenyl-diphosphate delta-isomerase (350 aa).

A substrate-binding site is contributed by 15–16 (RK). FMN-binding positions include serine 73, 74-76 (SMT), serine 104, and asparagine 132. 104–106 (SQR) is a binding site for substrate. Glutamine 167 is a substrate binding site. Mg(2+) is bound at residue glutamate 168. FMN is bound by residues lysine 199, threonine 229, 279-281 (GLR), and 300-301 (AM).

This sequence belongs to the IPP isomerase type 2 family. As to quaternary structure, homooctamer. Dimer of tetramers. The cofactor is FMN. NADPH is required as a cofactor. Requires Mg(2+) as cofactor.

Its subcellular location is the cytoplasm. The enzyme catalyses isopentenyl diphosphate = dimethylallyl diphosphate. In terms of biological role, involved in the biosynthesis of isoprenoids. Catalyzes the 1,3-allylic rearrangement of the homoallylic substrate isopentenyl (IPP) to its allylic isomer, dimethylallyl diphosphate (DMAPP). This is Isopentenyl-diphosphate delta-isomerase from Nostoc sp. (strain PCC 7120 / SAG 25.82 / UTEX 2576).